We begin with the raw amino-acid sequence, 572 residues long: AAA ATPase forming ring-shaped complexes (572 aa).

Residues 1 to 22 (MTEPRHESGSAAPQRPATDPVQ) are disordered. Residues 21–67 (VQRQVNLLRDQKRNLDKQAAALASQNEKLVRLLNASRQEIVGLKKTL) adopt a coiled-coil conformation. 270-275 (GNGKTL) serves as a coordination point for ATP. Positions 527 to 539 (HEQQDLPDTEDSE) are enriched in acidic residues. The interval 527 to 572 (HEQQDLPDTEDSEDWARLTGRRGDTIDSVHMASHRPQGEPGPGATP) is disordered.

This sequence belongs to the AAA ATPase family. In terms of assembly, homohexamer. Assembles into a hexameric ring structure.

This is AAA ATPase forming ring-shaped complexes from Kocuria rhizophila (strain ATCC 9341 / DSM 348 / NBRC 103217 / DC2201).